Consider the following 157-residue polypeptide: Urease accessory protein UreE (157 aa).

This sequence belongs to the UreE family.

Its subcellular location is the cytoplasm. In terms of biological role, involved in urease metallocenter assembly. Binds nickel. Probably functions as a nickel donor during metallocenter assembly. The sequence is that of Urease accessory protein UreE from Paenarthrobacter aurescens (strain TC1).